Here is a 259-residue protein sequence, read N- to C-terminus: uncharacterized protein (259 aa).

Positions 1–22 (MKHSKKLLLCISFLLITVFISG) are cleaved as a signal peptide. A lipid anchor (N-palmitoyl cysteine) is attached at Cys-23. Cys-23 carries S-diacylglycerol cysteine lipidation.

The protein belongs to the staphylococcal tandem lipoprotein family.

It is found in the cell membrane. This is an uncharacterized protein from Staphylococcus epidermidis (strain ATCC 35984 / DSM 28319 / BCRC 17069 / CCUG 31568 / BM 3577 / RP62A).